Reading from the N-terminus, the 167-residue chain is UPF0225 protein VV1358 (167 aa).

The protein belongs to the UPF0225 family.

The sequence is that of UPF0225 protein VV1358 from Vibrio vulnificus (strain YJ016).